We begin with the raw amino-acid sequence, 478 residues long: Glycogen synthase (478 aa).

K15 lines the ADP-alpha-D-glucose pocket.

Belongs to the glycosyltransferase 1 family. Bacterial/plant glycogen synthase subfamily.

The enzyme catalyses [(1-&gt;4)-alpha-D-glucosyl](n) + ADP-alpha-D-glucose = [(1-&gt;4)-alpha-D-glucosyl](n+1) + ADP + H(+). It participates in glycan biosynthesis; glycogen biosynthesis. In terms of biological role, synthesizes alpha-1,4-glucan chains using ADP-glucose. In Clostridium botulinum (strain Eklund 17B / Type B), this protein is Glycogen synthase.